The chain runs to 244 residues: Lectin (244 aa).

The interval 1 to 20 (TETETTSFSIPKTDQPSSPK) is disordered.

The protein belongs to the leguminous lectin family. Homodimer. In contrast to other Lathyrus lectins which are tetramer of two alpha and two beta chains.

The polypeptide is Lectin (Lathyrus sphaericus (Spring vetchling)).